The primary structure comprises 398 residues: Cytochrome b (398 aa).

4 helical membrane-spanning segments follow: residues 33 to 53 (FGSL…FLAM), 77 to 98 (WLIR…YLHI), 113 to 133 (WNIG…GYVL), and 178 to 198 (FFAF…IHLL). Positions 83 and 97 each coordinate heme b. Heme b-binding residues include His-182 and His-196. Residue His-201 coordinates a ubiquinone. A run of 4 helical transmembrane segments spans residues 226-246 (YKDL…SLFA), 288-308 (LGGV…PILH), 320-340 (FTQL…WIGG), and 347-367 (YVVI…FLIP).

The protein belongs to the cytochrome b family. In terms of assembly, the cytochrome bc1 complex contains 3 respiratory subunits (MT-CYB, CYC1 and UQCRFS1), 2 core proteins (UQCRC1 and UQCRC2) and probably 6 low-molecular weight proteins. Requires heme b as cofactor.

The protein resides in the mitochondrion inner membrane. Its function is as follows. Component of the ubiquinol-cytochrome c reductase complex (complex III or cytochrome b-c1 complex) that is part of the mitochondrial respiratory chain. The b-c1 complex mediates electron transfer from ubiquinol to cytochrome c. Contributes to the generation of a proton gradient across the mitochondrial membrane that is then used for ATP synthesis. The chain is Cytochrome b (mt-cyb) from Channa asiatica (Small snakehead).